The following is a 568-amino-acid chain: Cyclin-dependent kinase-like 2 (568 aa).

A Protein kinase domain is found at 4–289 (YENLGLVGEG…CADLLRHDFF (286 aa)). ATP is bound by residues 10 to 18 (VGEGSYGMV) and Lys-33. Residues 45 to 51 (KKIAMRE) carry the [NKR]KIAxRE motif. Catalysis depends on Asp-126, which acts as the Proton acceptor. 2 disordered regions span residues 309-333 (DARN…LGEE) and 545-568 (SHQG…EHQH). Residues 322 to 333 (RKKEKDDALGEE) show a composition bias toward basic and acidic residues.

This sequence belongs to the protein kinase superfamily. CMGC Ser/Thr protein kinase family. CDC2/CDKX subfamily. Expressed in testis, kidney, lung and brain.

It is found in the cytoplasm. The protein localises to the nucleus. It catalyses the reaction L-seryl-[protein] + ATP = O-phospho-L-seryl-[protein] + ADP + H(+). It carries out the reaction L-threonyl-[protein] + ATP = O-phospho-L-threonyl-[protein] + ADP + H(+). The polypeptide is Cyclin-dependent kinase-like 2 (Mus musculus (Mouse)).